Here is a 283-residue protein sequence, read N- to C-terminus: Large ribosomal subunit protein uL2 (283 aa).

Residues 215–283 (RHKGIRPTVR…IRGRKKRINN (69 aa)) are disordered. The segment covering 274–283 (IRGRKKRINN) has biased composition (basic residues).

It belongs to the universal ribosomal protein uL2 family. In terms of assembly, part of the 50S ribosomal subunit. Forms a bridge to the 30S subunit in the 70S ribosome.

Its function is as follows. One of the primary rRNA binding proteins. Required for association of the 30S and 50S subunits to form the 70S ribosome, for tRNA binding and peptide bond formation. It has been suggested to have peptidyltransferase activity; this is somewhat controversial. Makes several contacts with the 16S rRNA in the 70S ribosome. This chain is Large ribosomal subunit protein uL2, found in Mycoplasma mobile (strain ATCC 43663 / 163K / NCTC 11711) (Mesomycoplasma mobile).